Here is a 209-residue protein sequence, read N- to C-terminus: Large ribosomal subunit protein uL3 (209 aa).

The tract at residues 132-153 is disordered; that stretch reads ATHGNSLSHRVPGSIGQNQTPG. Gln150 carries the N5-methylglutamine modification.

It belongs to the universal ribosomal protein uL3 family. As to quaternary structure, part of the 50S ribosomal subunit. Forms a cluster with proteins L14 and L19. Methylated by PrmB.

Functionally, one of the primary rRNA binding proteins, it binds directly near the 3'-end of the 23S rRNA, where it nucleates assembly of the 50S subunit. The polypeptide is Large ribosomal subunit protein uL3 (Enterobacter sp. (strain 638)).